Reading from the N-terminus, the 321-residue chain is Ferredoxin--NADP reductase (321 aa).

7 residues coordinate FAD: aspartate 28, glutamine 36, tyrosine 41, alanine 81, phenylalanine 115, aspartate 274, and serine 315.

The protein belongs to the ferredoxin--NADP reductase type 2 family. Homodimer. It depends on FAD as a cofactor.

The enzyme catalyses 2 reduced [2Fe-2S]-[ferredoxin] + NADP(+) + H(+) = 2 oxidized [2Fe-2S]-[ferredoxin] + NADPH. This chain is Ferredoxin--NADP reductase, found in Frankia alni (strain DSM 45986 / CECT 9034 / ACN14a).